A 210-amino-acid polypeptide reads, in one-letter code: uncharacterized protein (210 aa).

4 helical membrane-spanning segments follow: residues 5 to 25 (LAYIPIAAMMVIIPGADTMLV), 50 to 70 (FWTVIAILGLSVVIAKSVILF), 75 to 95 (YLGAAYLIYLGVKSFFAKSMF), and 155 to 175 (IILASILTLLAVLWFLFLVYI).

The protein belongs to the Rht family.

It localises to the cell membrane. This is an uncharacterized protein from Bacillus subtilis (strain 168).